The chain runs to 234 residues: Phosphoribosylaminoimidazole-succinocarboxamide synthase (234 aa).

Belongs to the SAICAR synthetase family.

It catalyses the reaction 5-amino-1-(5-phospho-D-ribosyl)imidazole-4-carboxylate + L-aspartate + ATP = (2S)-2-[5-amino-1-(5-phospho-beta-D-ribosyl)imidazole-4-carboxamido]succinate + ADP + phosphate + 2 H(+). The protein operates within purine metabolism; IMP biosynthesis via de novo pathway; 5-amino-1-(5-phospho-D-ribosyl)imidazole-4-carboxamide from 5-amino-1-(5-phospho-D-ribosyl)imidazole-4-carboxylate: step 1/2. The chain is Phosphoribosylaminoimidazole-succinocarboxamide synthase from Exiguobacterium sp. (strain ATCC BAA-1283 / AT1b).